We begin with the raw amino-acid sequence, 152 residues long: Large ribosomal subunit protein uL15 (152 aa).

The disordered stretch occupies residues 1-57 (MTSTLNTLKSNSGSRKKKLRKGRGIAAGQGASCGFGMRGQKSRSGRPTRPGFEGGQM). Over residues 14–23 (SRKKKLRKGR) the composition is skewed to basic residues. Positions 25-37 (IAAGQGASCGFGM) are enriched in gly residues.

It belongs to the universal ribosomal protein uL15 family. Part of the 50S ribosomal subunit.

In terms of biological role, binds to the 23S rRNA. This chain is Large ribosomal subunit protein uL15, found in Prochlorococcus marinus (strain MIT 9312).